Reading from the N-terminus, the 985-residue chain is Disease resistance protein At4g27190 (985 aa).

Positions 24–88 form a coiled coil; sequence ANAIKFKSNV…ISKARLKLEE (65 aa). The region spanning 167–429 is the NB-ARC domain; that stretch reads IGVWGMGGVG…MAEGFMEELG (263 aa). Position 171 to 178 (171 to 178) interacts with ATP; the sequence is GMGGVGKT. LRR repeat units follow at residues 502–523, 526–547, 551–572, 575–597, 598–620, and 621–643; these read SLRRVSLMNNKLESLPDLVEEF, KTSVLLLQGNFLLKEVPIGFLQ, TLRILNLSGTRIKSFPSCSLLR, SLHSLFLRDCFKLVKLPSLETLA, KLELLDLCGTHILEFPRGLEELK, and RFRHLDLSRTLHLESIPARVVSR.

This sequence belongs to the disease resistance NB-LRR family.

In terms of biological role, disease resistance protein. This Arabidopsis thaliana (Mouse-ear cress) protein is Disease resistance protein At4g27190.